Here is a 76-residue protein sequence, read N- to C-terminus: UPF0291 protein MW2494 (76 aa).

Belongs to the UPF0291 family.

It is found in the cytoplasm. This is UPF0291 protein MW2494 from Staphylococcus aureus (strain MW2).